The following is a 555-amino-acid chain: Oxygen-dependent choline dehydrogenase (555 aa).

4–33 (DYIIIGAGSAGNVLATRLTEDADVSVLLLE) is an FAD binding site. Residues 180–202 (QQEGFGPMDRTVTPKGRRASTAR) form a disordered region. Catalysis depends on histidine 473, which acts as the Proton acceptor.

It belongs to the GMC oxidoreductase family. Requires FAD as cofactor.

The catalysed reaction is choline + A = betaine aldehyde + AH2. The enzyme catalyses betaine aldehyde + NAD(+) + H2O = glycine betaine + NADH + 2 H(+). It participates in amine and polyamine biosynthesis; betaine biosynthesis via choline pathway; betaine aldehyde from choline (cytochrome c reductase route): step 1/1. Its function is as follows. Involved in the biosynthesis of the osmoprotectant glycine betaine. Catalyzes the oxidation of choline to betaine aldehyde and betaine aldehyde to glycine betaine at the same rate. The polypeptide is Oxygen-dependent choline dehydrogenase (Serratia proteamaculans (strain 568)).